The following is a 507-amino-acid chain: ATP synthase subunit alpha (507 aa).

Residue 168-175 coordinates ATP; sequence GDRQTGKT.

It belongs to the ATPase alpha/beta chains family. As to quaternary structure, F-type ATPases have 2 components, CF(1) - the catalytic core - and CF(0) - the membrane proton channel. CF(1) has five subunits: alpha(3), beta(3), gamma(1), delta(1), epsilon(1). CF(0) has three main subunits: a(1), b(2) and c(9-12). The alpha and beta chains form an alternating ring which encloses part of the gamma chain. CF(1) is attached to CF(0) by a central stalk formed by the gamma and epsilon chains, while a peripheral stalk is formed by the delta and b chains.

It is found in the cell membrane. It catalyses the reaction ATP + H2O + 4 H(+)(in) = ADP + phosphate + 5 H(+)(out). Functionally, produces ATP from ADP in the presence of a proton gradient across the membrane. The alpha chain is a regulatory subunit. The protein is ATP synthase subunit alpha of Mesomycoplasma hyopneumoniae (strain 7448) (Mycoplasma hyopneumoniae).